We begin with the raw amino-acid sequence, 386 residues long: Citrate synthase (386 aa).

Catalysis depends on residues H266 and D322.

It belongs to the citrate synthase family.

The enzyme catalyses oxaloacetate + acetyl-CoA + H2O = citrate + CoA + H(+). The protein operates within carbohydrate metabolism; tricarboxylic acid cycle; isocitrate from oxaloacetate: step 1/2. In Acidithiobacillus ferridurans, this protein is Citrate synthase (gltA).